Reading from the N-terminus, the 347-residue chain is Aurora kinase A- and ninein-interacting protein (347 aa).

The interval 182–347 (QREAKRKREG…DSEGNRVIRH (166 aa)) is interaction with AURKA. The tract at residues 273–347 (RDSWSQLFTE…DSEGNRVIRH (75 aa)) is interaction with RBBP8/CtIP. Phosphoserine is present on serine 284. The span at 301–322 (VTNARNQGSGQFPDSPQAQGQD) shows a compositional bias: polar residues. The tract at residues 301-325 (VTNARNQGSGQFPDSPQAQGQDGPT) is disordered.

It belongs to the AUNIP family. As to quaternary structure, interacts (via C-terminus) with AURKA (via C-terminus). Interacts (via N-terminus) with NIN; this interaction blocks NIN phosphorylation by both AURKA and GSK3B. Identified in a complex with NIN and AURKA. Interacts with RBBP8/CtIP.

The protein localises to the nucleus. The protein resides in the chromosome. It localises to the cytoplasm. Its subcellular location is the cytoskeleton. It is found in the microtubule organizing center. The protein localises to the centrosome. The protein resides in the spindle pole. Its function is as follows. DNA-binding protein that accumulates at DNA double-strand breaks (DSBs) following DNA damage and promotes DNA resection and homologous recombination. Serves as a sensor of DNA damage: binds DNA with a strong preference for DNA substrates that mimic structures generated at stalled replication forks, and anchors RBBP8/CtIP to DSB sites to promote DNA end resection and ensuing homologous recombination repair. Inhibits non-homologous end joining (NHEJ). Required for the dynamic movement of AURKA at the centrosomes and spindle apparatus during the cell cycle. In Rattus norvegicus (Rat), this protein is Aurora kinase A- and ninein-interacting protein.